Reading from the N-terminus, the 408-residue chain is NADH-quinone oxidoreductase subunit D (408 aa).

This sequence belongs to the complex I 49 kDa subunit family. In terms of assembly, NDH-1 is composed of 14 different subunits. Subunits NuoB, C, D, E, F, and G constitute the peripheral sector of the complex.

The protein resides in the cell inner membrane. It carries out the reaction a quinone + NADH + 5 H(+)(in) = a quinol + NAD(+) + 4 H(+)(out). Its function is as follows. NDH-1 shuttles electrons from NADH, via FMN and iron-sulfur (Fe-S) centers, to quinones in the respiratory chain. The immediate electron acceptor for the enzyme in this species is believed to be ubiquinone. Couples the redox reaction to proton translocation (for every two electrons transferred, four hydrogen ions are translocated across the cytoplasmic membrane), and thus conserves the redox energy in a proton gradient. The sequence is that of NADH-quinone oxidoreductase subunit D from Campylobacter hominis (strain ATCC BAA-381 / DSM 21671 / CCUG 45161 / LMG 19568 / NCTC 13146 / CH001A).